The following is a 442-amino-acid chain: UDP-N-acetylmuramoylalanine--D-glutamate ligase (442 aa).

109–115 (GSNGKTT) is an ATP binding site.

This sequence belongs to the MurCDEF family.

The protein resides in the cytoplasm. The catalysed reaction is UDP-N-acetyl-alpha-D-muramoyl-L-alanine + D-glutamate + ATP = UDP-N-acetyl-alpha-D-muramoyl-L-alanyl-D-glutamate + ADP + phosphate + H(+). It functions in the pathway cell wall biogenesis; peptidoglycan biosynthesis. In terms of biological role, cell wall formation. Catalyzes the addition of glutamate to the nucleotide precursor UDP-N-acetylmuramoyl-L-alanine (UMA). The polypeptide is UDP-N-acetylmuramoylalanine--D-glutamate ligase (Solibacter usitatus (strain Ellin6076)).